The primary structure comprises 141 residues: Hemoglobin subunit alpha-2 (141 aa).

At S1 the chain carries N-acetylserine. Residues 1-141 (SLSTKDKETV…LARALSEKYR (141 aa)) form the Globin domain. Residue H59 coordinates O2. H88 provides a ligand contact to heme b.

It belongs to the globin family. In terms of assembly, hb2 is a heterotetramer of two alpha-2 chains and two beta chains. In terms of tissue distribution, red blood cells.

Functionally, involved in oxygen transport from gills to the various peripheral tissues. This Notothenia angustata (Rockcod) protein is Hemoglobin subunit alpha-2 (hba2).